Consider the following 246-residue polypeptide: Endonuclease NucS (246 aa).

This sequence belongs to the NucS endonuclease family.

The protein localises to the cytoplasm. Its function is as follows. Cleaves both 3' and 5' ssDNA extremities of branched DNA structures. This chain is Endonuclease NucS, found in Corynebacterium urealyticum (strain ATCC 43042 / DSM 7109).